The following is a 272-amino-acid chain: Putative phosphoenolpyruvate synthase regulatory protein (272 aa).

152–159 (GVSRCGKT) contacts ADP.

The protein belongs to the pyruvate, phosphate/water dikinase regulatory protein family. PSRP subfamily.

It carries out the reaction [pyruvate, water dikinase] + ADP = [pyruvate, water dikinase]-phosphate + AMP + H(+). The enzyme catalyses [pyruvate, water dikinase]-phosphate + phosphate + H(+) = [pyruvate, water dikinase] + diphosphate. Bifunctional serine/threonine kinase and phosphorylase involved in the regulation of the phosphoenolpyruvate synthase (PEPS) by catalyzing its phosphorylation/dephosphorylation. This chain is Putative phosphoenolpyruvate synthase regulatory protein, found in Pseudomonas putida (strain ATCC 47054 / DSM 6125 / CFBP 8728 / NCIMB 11950 / KT2440).